The following is a 301-amino-acid chain: Transposase InsD for insertion element IS2D (301 aa).

Residues 106–289 (KPAVPPSKRA…SPREYLRQRA (184 aa)) enclose the Integrase catalytic domain.

Its function is as follows. Involved in the transposition of the insertion sequence IS2. This chain is Transposase InsD for insertion element IS2D (insD2), found in Escherichia coli (strain K12).